The chain runs to 98 residues: MANTNSAKKRIQIAERNRLENKNYKSTVRTLMKRCFVACGIFEKEPGDESKADLQKTFNLAFSKIDKAVKKGVLHKNTGANQKSRLSVALKKVLKEVV.

This sequence belongs to the bacterial ribosomal protein bS20 family.

Its function is as follows. Binds directly to 16S ribosomal RNA. This is Small ribosomal subunit protein bS20 from Prochlorococcus marinus (strain NATL1A).